A 426-amino-acid chain; its full sequence is Enolase (426 aa).

A (2R)-2-phosphoglycerate-binding site is contributed by glutamine 165. Catalysis depends on glutamate 209, which acts as the Proton donor. Positions 244, 287, and 313 each coordinate Mg(2+). 4 residues coordinate (2R)-2-phosphoglycerate: lysine 338, arginine 367, serine 368, and lysine 389. Lysine 338 (proton acceptor) is an active-site residue.

The protein belongs to the enolase family. Mg(2+) serves as cofactor.

The protein resides in the cytoplasm. It localises to the secreted. The protein localises to the cell surface. It carries out the reaction (2R)-2-phosphoglycerate = phosphoenolpyruvate + H2O. It functions in the pathway carbohydrate degradation; glycolysis; pyruvate from D-glyceraldehyde 3-phosphate: step 4/5. Its function is as follows. Catalyzes the reversible conversion of 2-phosphoglycerate (2-PG) into phosphoenolpyruvate (PEP). It is essential for the degradation of carbohydrates via glycolysis. The sequence is that of Enolase from Methanococcus vannielii (strain ATCC 35089 / DSM 1224 / JCM 13029 / OCM 148 / SB).